Reading from the N-terminus, the 572-residue chain is Phenylalanine--tRNA ligase beta subunit (572 aa).

One can recognise a B5 domain in the interval 278-353 (LTPKEFEVEF…IAYGYNEIKP (76 aa)). Asp-331, Asp-337, Glu-340, and Asp-341 together coordinate Mg(2+).

The protein belongs to the phenylalanyl-tRNA synthetase beta subunit family. Type 2 subfamily. As to quaternary structure, tetramer of two alpha and two beta subunits. Mg(2+) serves as cofactor.

Its subcellular location is the cytoplasm. The catalysed reaction is tRNA(Phe) + L-phenylalanine + ATP = L-phenylalanyl-tRNA(Phe) + AMP + diphosphate + H(+). The protein is Phenylalanine--tRNA ligase beta subunit of Thermococcus onnurineus (strain NA1).